Consider the following 90-residue polypeptide: Gene 56 protein (90 aa).

The 90-residue stretch at 1–90 (MRTMFTPITI…DYYTASETGL (90 aa)) folds into the Glutaredoxin domain. Cysteine 16 and cysteine 19 are joined by a disulfide.

The polypeptide is Gene 56 protein (56) (Mycobacterium phage D29 (Mycobacteriophage D29)).